We begin with the raw amino-acid sequence, 482 residues long: Zinc finger protein 223 (482 aa).

A KRAB domain is found at 8-78 (VTFKDVAVVF…DIATQREGNS (71 aa)). 5 consecutive C2H2-type zinc fingers follow at residues 176-198 (HSCD…QRVH), 204-226 (FKCD…QRVH), 232-254 (FKCE…CKLH), 260-282 (YNCE…QRIH), and 288-310 (FKCE…CVVH). The C2H2-type 6; degenerate zinc-finger motif lies at 316–338 (NSTGEYGKGFIRRLDLCKHQTIH). 3 C2H2-type zinc fingers span residues 344–366 (YNCK…QRVH), 372–394 (YKCD…HRAH), and 400–422 (YNCD…KRLH). The C2H2-type 10; degenerate zinc-finger motif lies at 428-450 (FKCEDCGKKLVYRSYRKDQQKNH).

This sequence belongs to the krueppel C2H2-type zinc-finger protein family.

It localises to the nucleus. In terms of biological role, may be involved in transcriptional regulation. The protein is Zinc finger protein 223 (ZNF223) of Homo sapiens (Human).